The primary structure comprises 329 residues: Aspartate carbamoyltransferase catalytic subunit (329 aa).

The carbamoyl phosphate site is built by Arg66 and Thr67. Lys94 provides a ligand contact to L-aspartate. Residues Arg116, His149, and Gln152 each coordinate carbamoyl phosphate. Positions 189 and 243 each coordinate L-aspartate. Residues Gly284 and Pro285 each contribute to the carbamoyl phosphate site.

The protein belongs to the aspartate/ornithine carbamoyltransferase superfamily. ATCase family. As to quaternary structure, heterododecamer (2C3:3R2) of six catalytic PyrB chains organized as two trimers (C3), and six regulatory PyrI chains organized as three dimers (R2).

It carries out the reaction carbamoyl phosphate + L-aspartate = N-carbamoyl-L-aspartate + phosphate + H(+). It functions in the pathway pyrimidine metabolism; UMP biosynthesis via de novo pathway; (S)-dihydroorotate from bicarbonate: step 2/3. In terms of biological role, catalyzes the condensation of carbamoyl phosphate and aspartate to form carbamoyl aspartate and inorganic phosphate, the committed step in the de novo pyrimidine nucleotide biosynthesis pathway. In Gloeobacter violaceus (strain ATCC 29082 / PCC 7421), this protein is Aspartate carbamoyltransferase catalytic subunit.